A 198-amino-acid chain; its full sequence is T-cell surface glycoprotein CD3 epsilon chain (198 aa).

The signal sequence occupies residues 1 to 21; that stretch reads MRAGTLWRVLALWLLSVAAWG. The Extracellular portion of the chain corresponds to 22–120; it reads QEDDDHADDY…EACMEVDLTT (99 aa). In terms of domain architecture, Ig-like spans 28–106; the sequence is ADDYTQKLFT…KENEHILYLK (79 aa). The cysteines at positions 49 and 90 are disulfide-linked. A helical membrane pass occupies residues 121-141; that stretch reads VASIVVADVCVTLGLLLLVYY. The Cytoplasmic segment spans residues 142–198; sequence WSKNRKAKCKPVTRGAGAGGRPRGQNKERPPPVPNPDYEPIRKGQRDLYSGLNQRGI. The disordered stretch occupies residues 153–198; the sequence is VTRGAGAGGRPRGQNKERPPPVPNPDYEPIRKGQRDLYSGLNQRGI. Residues 166–183 form an NUMB-binding region region; sequence QNKERPPPVPNPDYEPIR. The 28-residue stretch at 169 to 196 folds into the ITAM domain; that stretch reads ERPPPVPNPDYEPIRKGQRDLYSGLNQR. Residues 170 to 177 form a proline-rich sequence region; sequence RPPPVPNP. Phosphotyrosine is present on residues Y179 and Y190.

As to quaternary structure, the TCR-CD3 complex is composed of a CD3D/CD3E and a CD3G/CD3E heterodimers that preferentially associate with TCRalpha and TCRbeta, respectively, to form TCRalpha/CD3E/CD3G and TCRbeta/CD3G/CD3E trimers. In turn, the hexamer interacts with CD3Z homodimer to form the TCR-CD3 complex. Alternatively, TCRalpha and TCRbeta can be replaced by TCRgamma and TCRdelta. Interacts with CD6. Interacts (via Proline-rich sequence) with NCK1; the interaction is ligand dependent but independent of tyrosine kinase activation. Post-translationally, phosphorylated on Tyr residues after T-cell receptor triggering by LCK in association with CD4/CD8.

The protein resides in the cell membrane. In terms of biological role, part of the TCR-CD3 complex present on T-lymphocyte cell surface that plays an essential role in adaptive immune response. When antigen presenting cells (APCs) activate T-cell receptor (TCR), TCR-mediated signals are transmitted across the cell membrane by the CD3 chains CD3D, CD3E, CD3G and CD3Z. All CD3 chains contain immunoreceptor tyrosine-based activation motifs (ITAMs) in their cytoplasmic domain. Upon TCR engagement, these motifs become phosphorylated by Src family protein tyrosine kinases LCK and FYN, resulting in the activation of downstream signaling pathways. In addition of this role of signal transduction in T-cell activation, CD3E plays an essential role in correct T-cell development. Also participates in internalization and cell surface down-regulation of TCR-CD3 complexes via endocytosis sequences present in CD3E cytosolic region. In addition to its role as a TCR coreceptor, it serves as a receptor for ITPRIPL1. Ligand recognition inhibits T-cell activation by promoting interaction with NCK1, which prevents CD3E-ZAP70 interaction and blocks the ERK-NFkB signaling cascade and calcium influx. In Oryctolagus cuniculus (Rabbit), this protein is T-cell surface glycoprotein CD3 epsilon chain (CD3E).